Here is a 651-residue protein sequence, read N- to C-terminus: PTS system N-acetylglucosamine-specific EIICBA component (651 aa).

One can recognise a PTS EIIC type-1 domain in the interval 1 to 371 (MNILGFFQRL…FNLKTPGRED (371 aa)). The next 12 helical transmembrane spans lie at 16 to 36 (LPIA…PDLL), 40 to 60 (FIAQ…AIGV), 70 to 90 (GSAA…MVTI), 92 to 112 (PEIN…GAVY), 132 to 152 (FVPI…GYVW), 165 to 185 (WIVS…RLLI), 192 to 212 (VLNT…GTVF), 232 to 252 (GFFP…YLAA), 264 to 284 (LLSV…EFLF), 285 to 305 (LFLA…SLFI), 308 to 328 (ALGI…VLMY), and 339 to 359 (MLLV…SAVI). The PTS EIIB type-1 domain occupies 390-472 (TQLATSYIAA…KKVVTRGPVA (83 aa)). C412 serves as the catalytic Phosphocysteine intermediate; for EIIB activity. Phosphocysteine; by EIIA is present on C412. Residues 519 to 623 (DEAFASKAVG…SMISPVVCSN (105 aa)) enclose the PTS EIIA type-1 domain. 2 residues coordinate Zn(2+): H556 and H571. Catalysis depends on H571, which acts as the Tele-phosphohistidine intermediate; for EIIA activity. H571 is subject to Phosphohistidine; by HPr.

The cofactor is Zn(2+).

Its subcellular location is the cell inner membrane. The catalysed reaction is N(pros)-phospho-L-histidyl-[protein] + N-acetyl-D-glucosamine(out) = N-acetyl-D-glucosamine 6-phosphate(in) + L-histidyl-[protein]. Its function is as follows. The phosphoenolpyruvate-dependent sugar phosphotransferase system (sugar PTS), a major carbohydrate active transport system, catalyzes the phosphorylation of incoming sugar substrates concomitantly with their translocation across the cell membrane. This system is involved in N-acetylglucosamine transport. This Klebsiella pneumoniae protein is PTS system N-acetylglucosamine-specific EIICBA component (nagE).